We begin with the raw amino-acid sequence, 394 residues long: Proliferation-associated protein 2G4 (394 aa).

The residue at position 2 (Ser-2) is an N-acetylserine. Ser-2 is modified (phosphoserine). A necessary for nucleolar localization region spans residues 2-48 (SGEDEQQEQTIAEDLVVTKYKMGGDIANRVLRSLVEASSSGVSVLSL). An RNA-binding region spans residues 46 to 54 (LSLCEKGDA). Residue Lys-298 forms a Glycyl lysine isopeptide (Lys-Gly) (interchain with G-Cter in SUMO2) linkage. Residues 301-394 (LLQPFNVLYE…ETLEENEAGD (94 aa)) are necessary for nucleolar localization. A Phosphoserine modification is found at Ser-335. Positions 358-394 (LQSSASRKTQKKKKKKASKTAENATSGETLEENEAGD) are disordered. Ser-361 is subject to Phosphoserine; by PKC/PRKCD. The tract at residues 361–375 (SASRKTQKKKKKKAS) is interaction with RNA. A compositionally biased stretch (basic residues) spans 365–375 (KTQKKKKKKAS). Phosphothreonine is present on residues Thr-366 and Thr-386.

The protein belongs to the peptidase M24 family. In terms of assembly, isoform 2 interacts with the cytoplasmic domain of non-phosphorylated ERBB3; the interaction requires PKC activity. Interacts with AR. Treatment with HRG leads to dissociation from ERBB3 and increases association with AR. Interacts with NCL/nucleolin. Component of a ribonucleoprotein complex containing at least PA2G4, NCL, TOP1, PABPC2, RPLP0, acetylated histone H1 (HIST1H1A or H1F1), histone H1 2/4, RPL4, RPL8, RPL15, RPL18, RPL18A, RPL21, RPL11, RPL12, RPL28, RPL27, RPLP2 and RPL24. Interacts with HDAC2. Interacts with RB1; the interaction is enhanced upon PA2G4 dephosphorylation. Interacts with AKT1. Isoform 1 and isoform 2 interact with RNF20. Isoform 2 interacts with HUWE1. Interacts with DNAJC21. Post-translationally, phosphorylated on serine and threonine residues. Phosphorylation is enhanced by HRG treatment. Basal phosphorylation is PKC-dependent and HRG-induced phosphorylation is predominantly PKC-independent. Phosphorylation at Ser-361 by PKC/PRKCD regulates its nucleolar localization. In terms of processing, in cancer cells, isoform 2 is polyubiquitinated leading to its proteasomal degradation and phosphorylation by PKC/PRKCD enhances polyubiquitination. As to expression, isoform 2 is undetectable whereas isoform 1 is strongly expressed in cancer cells (at protein level). Isoform 1 and isoform 2 are widely expressed, including heart, brain, lung, pancreas, skeletal muscle, kidney, placenta and liver.

Its subcellular location is the cytoplasm. The protein resides in the nucleus. It localises to the nucleolus. May play a role in a ERBB3-regulated signal transduction pathway. Seems be involved in growth regulation. Acts a corepressor of the androgen receptor (AR) and is regulated by the ERBB3 ligand neuregulin-1/heregulin (HRG). Inhibits transcription of some E2F1-regulated promoters, probably by recruiting histone acetylase (HAT) activity. Binds RNA. Associates with 28S, 18S and 5.8S mature rRNAs, several rRNA precursors and probably U3 small nucleolar RNA. May be involved in regulation of intermediate and late steps of rRNA processing. May be involved in ribosome assembly. Mediates cap-independent translation of specific viral IRESs (internal ribosomal entry site). Regulates cell proliferation, differentiation, and survival. Isoform 1 suppresses apoptosis whereas isoform 2 promotes cell differentiation. This Homo sapiens (Human) protein is Proliferation-associated protein 2G4 (PA2G4).